A 395-amino-acid chain; its full sequence is Calcium sensing receptor, chloroplastic (395 aa).

Positions 1–12 (MAPVPVSVSATL) are enriched in low complexity. Positions 1-27 (MAPVPVSVSATLAPPPAAPPKTTSRSW) are disordered. The transit peptide at 1–39 (MAPVPVSVSATLAPPPAAPPKTTSRSWERRAPADAAFAA) directs the protein to the chloroplast. Residues 40-182 (ASSVAGSAAL…TITSLGPEDY (143 aa)) lie on the Lumenal, thylakoid side of the membrane. A helical transmembrane segment spans residues 183 to 203 (VVAAGXAFLAYLLVPPVWSLV). At 204–395 (SSSLRGYKGD…TRKLLPGGVD (192 aa)) the chain is on the stromal side. The Rhodanese domain occupies 224–345 (TTQGYVLIDV…WAQSRLGTDS (122 aa)). The residue at position 377 (threonine 377) is a Phosphothreonine.

Phosphorylated in both bundle sheath and mesophyll cells, under both low and high light regimes (70 vs 900 umol photons/m-2/s).

Its subcellular location is the plastid. It is found in the chloroplast thylakoid membrane. In terms of biological role, modulates cytoplasmic Ca(2+) concentration and is crucial for proper stomatal regulation in response to elevated levels of external Ca(2+). May function by regulating concentrations of inositol 1,4,5-trisphosphate (IP3), which in turn triggers release of Ca(2+) from internal stores. May play a role in de-etiolation. In Zea mays (Maize), this protein is Calcium sensing receptor, chloroplastic.